The primary structure comprises 158 residues: Large ribosomal subunit protein bL35m (158 aa).

This sequence belongs to the bacterial ribosomal protein bL35 family.

It localises to the mitochondrion. This is Large ribosomal subunit protein bL35m (mrpl-35) from Caenorhabditis elegans.